Here is a 269-residue protein sequence, read N- to C-terminus: Phosphate import ATP-binding protein PstB (269 aa).

The region spanning 14 to 253 is the ABC transporter domain; it reads LTLEDVSISY…EFDSTKKIFS (240 aa). 46–53 provides a ligand contact to ATP; the sequence is GPSGCGKS.

This sequence belongs to the ABC transporter superfamily. Phosphate importer (TC 3.A.1.7) family. In terms of assembly, the complex is composed of two ATP-binding proteins (PstB), two transmembrane proteins (PstC and PstA) and a solute-binding protein (PstS).

The protein localises to the cell inner membrane. The enzyme catalyses phosphate(out) + ATP + H2O = ADP + 2 phosphate(in) + H(+). Functionally, part of the ABC transporter complex PstSACB involved in phosphate import. Responsible for energy coupling to the transport system. The polypeptide is Phosphate import ATP-binding protein PstB (Prochlorococcus marinus subsp. pastoris (strain CCMP1986 / NIES-2087 / MED4)).